Consider the following 327-residue polypeptide: 2-oxoisovalerate dehydrogenase subunit beta (327 aa).

Thiamine diphosphate-binding positions include E29, L58–E60, Q82, and F86–P89. Residues F83–F86 and H129 contribute to the substrate site. Residue H129 is the Proton acceptor of the active site.

As to quaternary structure, heterotetramer of two alpha and two beta chains. Directly associated with ODBA in the E1 complex. Thiamine diphosphate is required as a cofactor.

It catalyses the reaction N(6)-[(R)-lipoyl]-L-lysyl-[protein] + 3-methyl-2-oxobutanoate + H(+) = N(6)-[(R)-S(8)-2-methylpropanoyldihydrolipoyl]-L-lysyl-[protein] + CO2. Functionally, the branched-chain alpha-keto dehydrogenase complex catalyzes the overall conversion of alpha-keto acids to acyl-CoA and CO(2). It contains multiple copies of three enzymatic components: branched-chain alpha-keto acid decarboxylase (E1), lipoamide acyltransferase (E2) and lipoamide dehydrogenase (E3). This is 2-oxoisovalerate dehydrogenase subunit beta (bfmBAB) from Bacillus subtilis (strain 168).